Here is a 578-residue protein sequence, read N- to C-terminus: SCARECROW-LIKE protein 7 (578 aa).

The segment covering 18–29 (VIQQQQQQQQQQ) has biased composition (low complexity). 2 disordered regions span residues 18-84 (VIQQ…LAYG) and 146-173 (PPPPVPSPPPTHAAATATATAATAAPRP). Positions 49 to 61 (PHHHQQKHHHHHQ) are enriched in basic residues. Positions 62 to 74 (QMPAMPQAPPSSH) are enriched in low complexity. Positions 146–156 (PPPPVPSPPPT) are enriched in pro residues. Positions 157 to 173 (HAAATATATAATAAPRP) are enriched in low complexity. The 381-residue stretch at 198-578 (SADASCSAPI…RPLLTVSAWR (381 aa)) folds into the GRAS domain. A leucine repeat I (LRI) region spans residues 205-264 (APILQSLLSCSRAAATDPGLAAAELASVRAAATDAGDPSERLAFYFADALSRRLACGTGA). Residues 283-349 (YKTLNDACPY…GKPTRIRITG (67 aa)) are VHIID. The VHIID signature appears at 314–318 (IHIVD). The interval 365-397 (ATNTRLRDFAKLLGVDFEFVPLLRPVHELNKSD) is leucine repeat II (LRII). The PFYRE stretch occupies residues 406-497 (VAVNFMLQLY…RWMFGERIQR (92 aa)). The short motif at 414–418 (LYHLL) is the LXXLL motif element. The SAW stretch occupies residues 500–578 (GPEEGADRTE…RPLLTVSAWR (79 aa)).

The protein belongs to the GRAS family. Homodimer.

It is found in the nucleus. In terms of biological role, probable transcription factor involved in plant development. Involved in environmental abiotic stress resistance. May increase the expression of stress-responsive genes. Binds DNA in vitro. The protein is SCARECROW-LIKE protein 7 of Oryza sativa subsp. japonica (Rice).